Reading from the N-terminus, the 457-residue chain is PE-PGRS family protein PE_PGRS18 (457 aa).

The PE domain maps to 1 to 92; sequence MSFVNVAPQL…SSTYAVAEAA (92 aa). NHL repeat units follow at residues 291–321, 333–363, 379–404, and 419–447; these read FNDP…IDPV, NGPS…IDPN, GVAV…IDPA, and PTGV…ITGE.

It belongs to the mycobacterial PE family. PGRS subfamily.

It is found in the secreted. The protein resides in the cell wall. Functionally, enhances mycobacterial intracellular survival, probably via altering host macrophage cytokine profiling and attenuating the cell apoptosis. Could be required for host endothelial-cell invasion. Expression in Mycobacterium smegmatis, a nonpathogenic species naturally deficient in PE_PGRS genes, results in alteration of the production of host cytokines, including IL-6, IL-1beta, IL-10 and IL-12p40, as well as enhanced survival within macrophages largely via attenuating the apoptosis of macrophages. This is PE-PGRS family protein PE_PGRS18 from Mycobacterium tuberculosis (strain ATCC 25618 / H37Rv).